The following is a 122-amino-acid chain: Large ribosomal subunit protein uL14 (122 aa).

This sequence belongs to the universal ribosomal protein uL14 family. As to quaternary structure, part of the 50S ribosomal subunit. Forms a cluster with proteins L3 and L19. In the 70S ribosome, L14 and L19 interact and together make contacts with the 16S rRNA in bridges B5 and B8.

Functionally, binds to 23S rRNA. Forms part of two intersubunit bridges in the 70S ribosome. The sequence is that of Large ribosomal subunit protein uL14 from Thermotoga maritima (strain ATCC 43589 / DSM 3109 / JCM 10099 / NBRC 100826 / MSB8).